The primary structure comprises 285 residues: Extracellular metalloprotease SMAC_06893 (285 aa).

Residues 1-18 (MQIKSLLLAAAAAPAALG) form the signal peptide. Zn(2+) is bound at residue H197. Residue E198 is part of the active site. H201 provides a ligand contact to Zn(2+). A disulfide bond links C233 and C260. N282 is a glycosylation site (N-linked (GlcNAc...) asparagine).

It belongs to the peptidase M43B family.

It is found in the secreted. In terms of biological role, secreted metalloproteinase that allows assimilation of proteinaceous substrates. This Sordaria macrospora (strain ATCC MYA-333 / DSM 997 / K(L3346) / K-hell) protein is Extracellular metalloprotease SMAC_06893.